The sequence spans 218 residues: Tubulin polymerization-promoting protein (218 aa).

Residues 1–45 (MADSKAKPTKAANKTPPKSPGDPAKAAKRLSLESEGANEGAAAAP) are disordered. The interval 2–115 (ADSKAKPTKA…SCRTITFEQF (114 aa)) is mediates interaction with LIMK1. Threonine 15 carries the post-translational modification Phosphothreonine. Phosphoserine occurs at positions 19, 31, and 34. The segment covering 33 to 45 (ESEGANEGAAAAP) has biased composition (low complexity). 4 residues coordinate Zn(2+): histidine 60, histidine 71, cysteine 79, and cysteine 82. Threonine 91 bears the Phosphothreonine mark. Serine 106 is subject to Phosphoserine. The O-linked (GlcNAc) serine glycan is linked to serine 151. Phosphoserine is present on residues serine 158 and serine 159. Positions 165–192 (LTDTSKFTGSHKERFDQSGKGKGKAGRV) are disordered. Over residues 174–183 (SHKERFDQSG) the composition is skewed to basic and acidic residues.

Belongs to the TPPP family. In terms of assembly, homodimer. Binds tubulin; binding is inhibited by GTP. Interacts with MAPK1. Interacts with GAPDH; the interaction is direct. Interacts with LIMK1 (via the PDZ domain); the interaction is direct. Interacts with LIMK2. Interacts with HDAC6; thereby inhibiting the tubulin deacetylase activity of HDAC6. Interacts with aggregated SNCA; may have a pro-aggregatory role in synucleinopathies. Interacts with DYNLL1. Interacts (via C-terminus) with S100A2, S100A6 and S100B; these interactions inhibit TPPP dimerization. Mg(2+) serves as cofactor. Post-translationally, phosphorylated by LIMK1 on serine residues; phosphorylation may alter the tubulin polymerization activity. Phosphorylation by LIMK2, but not LIMK1, regulates astral microtubule organization at early stage of mitosis. Phosphorylation by ROCK1 at Ser-31, Ser-106 and Ser-158 inhibits interaction with HDAC6, resulting in decreased acetylation of tubulin, increased cell motility and entry into S-phase. Phosphorylation by CDK1 inhibits the microtubule polymerizing activity. In terms of processing, degraded by the proteasome; zinc-binding inhibits degradation by the proteasome. As to expression, predominantly expressed in mature oligodendrocytes.

The protein localises to the golgi outpost. It localises to the cytoplasm. It is found in the cytoskeleton. Its subcellular location is the microtubule organizing center. The protein resides in the nucleus. The protein localises to the spindle. The catalysed reaction is GTP + H2O = GDP + phosphate + H(+). Functionally, regulator of microtubule dynamics that plays a key role in myelination by promoting elongation of the myelin sheath. Acts as a microtubule nucleation factor in oligodendrocytes: specifically localizes to the postsynaptic Golgi apparatus region, also named Golgi outpost, and promotes microtubule nucleation, an important step for elongation of the myelin sheath. Required for both uniform polarized growth of distal microtubules as well as directing the branching of proximal processes. Shows magnesium-dependent GTPase activity; the role of the GTPase activity is unclear. In addition to microtubule nucleation activity, also involved in microtubule bundling and stabilization of existing microtubules, thereby maintaining the integrity of the microtubule network. Regulates microtubule dynamics by promoting tubulin acetylation: acts by inhibiting the tubulin deacetylase activity of HDAC6. Also regulates cell migration: phosphorylation by ROCK1 inhibits interaction with HDAC6, resulting in decreased acetylation of tubulin and increased cell motility. Plays a role in cell proliferation by regulating the G1/S-phase transition. Involved in astral microtubule organization and mitotic spindle orientation during early stage of mitosis; this process is regulated by phosphorylation by LIMK2. The polypeptide is Tubulin polymerization-promoting protein (Rattus norvegicus (Rat)).